A 274-amino-acid polypeptide reads, in one-letter code: Urease accessory protein UreD (274 aa).

The protein belongs to the UreD family. UreD, UreF and UreG form a complex that acts as a GTP-hydrolysis-dependent molecular chaperone, activating the urease apoprotein by helping to assemble the nickel containing metallocenter of UreC. The UreE protein probably delivers the nickel.

Its subcellular location is the cytoplasm. Functionally, required for maturation of urease via the functional incorporation of the urease nickel metallocenter. This Thermosynechococcus vestitus (strain NIES-2133 / IAM M-273 / BP-1) protein is Urease accessory protein UreD.